We begin with the raw amino-acid sequence, 311 residues long: MTLPELPKDLVEEILCFVPATSLKRLRSTCKGWNRLFKDDKRFARKHIEKAAKQFQPLTLTKNYRICPINVNLHGTTPSLEVKNEWIELGDRYNEDKDSEIYEFSSDSWRVIDDIIKPPHYMEYFRKCLSLKGNTYWLGIDRRRRPPDLRITLIKFDFGTEKFGYVPLPPPCQVHGFEASRLSAVGDEKLSLLLVGDSTSNTELWVTSKIGEANVVSWSKVLSLYPKPNVGFWHGLSFLLDEEKKVLLCCKSKGWMKEEDEDNVYIVGEDTKFILLNFGVQTIGGYSPIIVNYVPSLGQIELAGSKRKRDY.

The F-box domain maps to 1–46; that stretch reads MTLPELPKDLVEEILCFVPATSLKRLRSTCKGWNRLFKDDKRFARK.

The chain is F-box protein At3g18320 from Arabidopsis thaliana (Mouse-ear cress).